A 101-amino-acid chain; its full sequence is Protein S100-A3 (101 aa).

2 EF-hand domains span residues 12–47 and 50–85; these read IVCTFQEYAGRCGDKYKICQSELKELLQKELPTWTP and FRECDYNKFMSVLDTNKDCEVDFGEYVRSLASLCLY. Lysine 26 serves as a coordination point for Ca(2+). A disulfide bridge connects residues cysteine 30 and cysteine 68. Arginine 51 is subject to Citrulline; by PAD3. Ca(2+)-binding residues include aspartate 63, asparagine 65, aspartate 67, glutamate 69, and glutamate 74. Zn(2+) contacts are provided by cysteine 83, cysteine 86, histidine 87, and cysteine 93.

It belongs to the S-100 family. In terms of assembly, homodimer and homotetramer for the citrullinated form. In terms of processing, more than half of the arginine residues undergo citrullination by PAD1 and PAD2. Arg-51 is specifically citrullinated by PAD3 and promotes tetramerization. Skin specific, specifically expressed in cuticle of pelage follicle.

It is found in the cytoplasm. Binds both calcium and zinc. May be involved in calcium-dependent cuticle cell differentiation, hair shaft and hair cuticular barrier formation. The chain is Protein S100-A3 (S100a3) from Mus musculus (Mouse).